The following is a 174-amino-acid chain: Ribosome maturation factor RimM (174 aa).

One can recognise a PRC barrel domain in the interval 101–174 (AGEFYLADLC…IELLQRWILE (74 aa)).

This sequence belongs to the RimM family. As to quaternary structure, binds ribosomal protein uS19.

It is found in the cytoplasm. Functionally, an accessory protein needed during the final step in the assembly of 30S ribosomal subunit, possibly for assembly of the head region. Essential for efficient processing of 16S rRNA. May be needed both before and after RbfA during the maturation of 16S rRNA. It has affinity for free ribosomal 30S subunits but not for 70S ribosomes. The polypeptide is Ribosome maturation factor RimM (Treponema pallidum (strain Nichols)).